The following is a 246-amino-acid chain: Chemokine-binding protein (246 aa).

Over residues 108 to 125 (SESSDGNTVNTRLSSVSP) the composition is skewed to polar residues. The interval 108–132 (SESSDGNTVNTRLSSVSPGQGKDSP) is disordered.

This sequence belongs to the orthopoxvirus OPG001 family.

It is found in the secreted. Functionally, inhibits host immune defense by binding to host chemokines. Binds host CC chemokines (beta chemokines) such as RANTES with high affinity, but not CXC or C chemokines (alpha and gamma chemokines). The polypeptide is Chemokine-binding protein (OPG001) (Monkeypox virus).